A 159-amino-acid polypeptide reads, in one-letter code: Ribosomal RNA large subunit methyltransferase H (159 aa).

Residues Leu-76, Gly-108, and 127 to 132 contribute to the S-adenosyl-L-methionine site; that span reads FSKMTF.

It belongs to the RNA methyltransferase RlmH family. In terms of assembly, homodimer.

The protein resides in the cytoplasm. The catalysed reaction is pseudouridine(1915) in 23S rRNA + S-adenosyl-L-methionine = N(3)-methylpseudouridine(1915) in 23S rRNA + S-adenosyl-L-homocysteine + H(+). In terms of biological role, specifically methylates the pseudouridine at position 1915 (m3Psi1915) in 23S rRNA. The polypeptide is Ribosomal RNA large subunit methyltransferase H (Bacillus subtilis (strain 168)).